Consider the following 463-residue polypeptide: Lipase 6 (463 aa).

The signal sequence occupies residues 1–16 (MRDLILFLSLLHTIFA). Cysteine 112 and cysteine 285 are joined by a disulfide. Catalysis depends on serine 196, which acts as the Charge relay system. N-linked (GlcNAc...) asparagine glycosylation is present at asparagine 231. Residues aspartate 348 and histidine 381 each act as charge relay system in the active site. Cysteine 364 and cysteine 409 are joined by a disulfide. Asparagine 422 carries N-linked (GlcNAc...) asparagine glycosylation.

Belongs to the AB hydrolase superfamily. Lipase family. Class Lip subfamily.

Its subcellular location is the secreted. It catalyses the reaction a triacylglycerol + H2O = a diacylglycerol + a fatty acid + H(+). In terms of biological role, secreted lipase that is able to hydrolyze both the neutral triacylglycerols and the monopalmitate ester Tween 40, allowing the use of hydrolyzed products as carbon sources. Has broad lipolytic activity, which may be important for colonization and subsequent infection, therefore contributing to the persistence and virulence in human tissue. The protein is Lipase 6 of Candida albicans (strain SC5314 / ATCC MYA-2876) (Yeast).